The sequence spans 921 residues: Isoleucine--tRNA ligase (921 aa).

The short motif at 57 to 67 (PYANGDIHMGH) is the 'HIGH' region element. E552 is an L-isoleucyl-5'-AMP binding site. A 'KMSKS' region motif is present at residues 593-597 (KMSKS). K596 serves as a coordination point for ATP. Residues C888, C891, C908, and C911 each contribute to the Zn(2+) site.

Belongs to the class-I aminoacyl-tRNA synthetase family. IleS type 1 subfamily. As to quaternary structure, monomer. Requires Zn(2+) as cofactor.

It is found in the cytoplasm. The enzyme catalyses tRNA(Ile) + L-isoleucine + ATP = L-isoleucyl-tRNA(Ile) + AMP + diphosphate. Catalyzes the attachment of isoleucine to tRNA(Ile). As IleRS can inadvertently accommodate and process structurally similar amino acids such as valine, to avoid such errors it has two additional distinct tRNA(Ile)-dependent editing activities. One activity is designated as 'pretransfer' editing and involves the hydrolysis of activated Val-AMP. The other activity is designated 'posttransfer' editing and involves deacylation of mischarged Val-tRNA(Ile). The chain is Isoleucine--tRNA ligase from Bacillus cereus (strain 03BB102).